The sequence spans 172 residues: Protein-export protein SecB (172 aa).

This sequence belongs to the SecB family. In terms of assembly, homotetramer, a dimer of dimers. One homotetramer interacts with 1 SecA dimer.

Its subcellular location is the cytoplasm. Its function is as follows. One of the proteins required for the normal export of preproteins out of the cell cytoplasm. It is a molecular chaperone that binds to a subset of precursor proteins, maintaining them in a translocation-competent state. It also specifically binds to its receptor SecA. In Haemophilus ducreyi (strain 35000HP / ATCC 700724), this protein is Protein-export protein SecB.